Reading from the N-terminus, the 356-residue chain is MGLLRIMMPPKLQLLAVVAFAVAMLFLENQIQKLEESRAKLERAIARHEVREIEQRHTMDGPRQDATLDEEEDIIIIYNRVPKTASTSFTNIAYDLCAKNRYHVLHINTTKNNPVMSLQDQVRFVKNITTWNEMKPGFYHGHISYLDFAKFGVKKKPIYINVIRDPIERLVSYYYFLRFGDDYRPGLRRRKQGDKKTFDECVAEGGSDCAPEKLWLQIPFFCGHSSECWNVGSRWAMDQAKSNLINEYFLVGVTEELEDFIMLLEAALPRFFRGATDLYRTGKKSHLRKTTEKKLPTKQTIAKLQQSDIWKMENEFYEFALEQFQFIRAHAVREKDGDLYILAQNFFYEKIYPKSN.

Over 1-11 (MGLLRIMMPPK) the chain is Cytoplasmic. A helical; Signal-anchor for type II membrane protein transmembrane segment spans residues 12 to 28 (LQLLAVVAFAVAMLFLE). Positions 24–51 (MLFLENQIQKLEESRAKLERAIARHEVR) form a coiled coil. At 29-356 (NQIQKLEESR…FYEKIYPKSN (328 aa)) the chain is on the lumenal side. Residues K83, T84, A85, S86, T87, and S88 each coordinate adenosine 3',5'-bisphosphate. N-linked (GlcNAc...) asparagine glycans are attached at residues N108 and N127. Active-site residues include H140 and H142. Adenosine 3',5'-bisphosphate-binding residues include R164 and S172. 2 cysteine pairs are disulfide-bonded: C201-C209 and C222-C228. Adenosine 3',5'-bisphosphate contacts are provided by Y279, S285, T290, and K293.

Belongs to the sulfotransferase 3 family. Homotrimer. Interacts with the C5-epimerase GLCE. N-glycosylated. As to expression, widely expressed. Expressed at higher level in lung and brain. Weakly expressed in spleen.

The protein resides in the golgi apparatus membrane. Functionally, catalyzes the transfer of a sulfo group from 3'-phospho-5'-adenylyl sulfate (PAPS) to the 2-OH position of iduronic acid (IdoA) or glucuronic acid (GlcA) within the heparan sulfate (HS) chain and participates in HS biosynthesis. Required for metanephric development of kidney formation, suggesting that 2-O-sulfation within HS is essential for signaling between ureteric bud and metanephric mesenchyme. The sequence is that of Heparan sulfate 2-O-sulfotransferase 1 from Mus musculus (Mouse).